The primary structure comprises 157 residues: Ribosomal RNA large subunit methyltransferase H (157 aa).

S-adenosyl-L-methionine is bound by residues L73, G105, and 124–129 (LSRMTF).

This sequence belongs to the RNA methyltransferase RlmH family. In terms of assembly, homodimer.

The protein resides in the cytoplasm. The enzyme catalyses pseudouridine(1915) in 23S rRNA + S-adenosyl-L-methionine = N(3)-methylpseudouridine(1915) in 23S rRNA + S-adenosyl-L-homocysteine + H(+). Functionally, specifically methylates the pseudouridine at position 1915 (m3Psi1915) in 23S rRNA. The chain is Ribosomal RNA large subunit methyltransferase H from Porphyromonas gingivalis (strain ATCC BAA-308 / W83).